The primary structure comprises 216 residues: MKFFVDTADTQDIADLAATGLIDGVTTNPSLIAKSGRPFAEVIAEICALTDGPVSAEVVAIDFDGMMREGRKLAKIADNVTVKLPLTLEGLKACKALTSDGIDVNVTLCFSANQALLAAKAGATFISPFIGRLDDIHIDGMELIQEIRQIYDNYMFETEILAASIRSPNHVRLCALAGADVMTAPPAVIRSLVSHPLTDKGLETFLADAKKAGIEV.

Lys83 (schiff-base intermediate with substrate) is an active-site residue.

The protein belongs to the transaldolase family. Type 3B subfamily.

It localises to the cytoplasm. It catalyses the reaction D-sedoheptulose 7-phosphate + D-glyceraldehyde 3-phosphate = D-erythrose 4-phosphate + beta-D-fructose 6-phosphate. The protein operates within carbohydrate degradation; pentose phosphate pathway; D-glyceraldehyde 3-phosphate and beta-D-fructose 6-phosphate from D-ribose 5-phosphate and D-xylulose 5-phosphate (non-oxidative stage): step 2/3. Its function is as follows. Transaldolase is important for the balance of metabolites in the pentose-phosphate pathway. The protein is Probable transaldolase of Hyphomonas neptunium (strain ATCC 15444).